The chain runs to 508 residues: Lysine--tRNA ligase (508 aa).

Residues Glu418 and Glu425 each coordinate Mg(2+).

This sequence belongs to the class-II aminoacyl-tRNA synthetase family. In terms of assembly, homodimer. It depends on Mg(2+) as a cofactor.

The protein resides in the cytoplasm. The catalysed reaction is tRNA(Lys) + L-lysine + ATP = L-lysyl-tRNA(Lys) + AMP + diphosphate. The sequence is that of Lysine--tRNA ligase from Burkholderia vietnamiensis (strain G4 / LMG 22486) (Burkholderia cepacia (strain R1808)).